A 257-amino-acid chain; its full sequence is Aspartate/glutamate leucyltransferase (257 aa).

This sequence belongs to the R-transferase family. Bpt subfamily.

The protein resides in the cytoplasm. The enzyme catalyses N-terminal L-glutamyl-[protein] + L-leucyl-tRNA(Leu) = N-terminal L-leucyl-L-glutamyl-[protein] + tRNA(Leu) + H(+). The catalysed reaction is N-terminal L-aspartyl-[protein] + L-leucyl-tRNA(Leu) = N-terminal L-leucyl-L-aspartyl-[protein] + tRNA(Leu) + H(+). Functionally, functions in the N-end rule pathway of protein degradation where it conjugates Leu from its aminoacyl-tRNA to the N-termini of proteins containing an N-terminal aspartate or glutamate. In Nitrobacter hamburgensis (strain DSM 10229 / NCIMB 13809 / X14), this protein is Aspartate/glutamate leucyltransferase.